The sequence spans 237 residues: Phosphoribosylaminoimidazole-succinocarboxamide synthase (237 aa).

The protein belongs to the SAICAR synthetase family.

It carries out the reaction 5-amino-1-(5-phospho-D-ribosyl)imidazole-4-carboxylate + L-aspartate + ATP = (2S)-2-[5-amino-1-(5-phospho-beta-D-ribosyl)imidazole-4-carboxamido]succinate + ADP + phosphate + 2 H(+). Its pathway is purine metabolism; IMP biosynthesis via de novo pathway; 5-amino-1-(5-phospho-D-ribosyl)imidazole-4-carboxamide from 5-amino-1-(5-phospho-D-ribosyl)imidazole-4-carboxylate: step 1/2. This is Phosphoribosylaminoimidazole-succinocarboxamide synthase from Escherichia coli O127:H6 (strain E2348/69 / EPEC).